Here is a 179-residue protein sequence, read N- to C-terminus: Putative mediator of RNA polymerase II transcription subunit 28 (179 aa).

The stretch at 81 to 119 forms a coiled coil; it reads SAEKNKIQLKQEIYKVKKEIENKDRLIERYKNKVKEWKY.

It belongs to the Mediator complex subunit 28 family. As to quaternary structure, component of the Mediator complex.

Its subcellular location is the nucleus. Functionally, component of the Mediator complex, a coactivator involved in the regulated transcription of nearly all RNA polymerase II-dependent genes. Mediator functions as a bridge to convey information from gene-specific regulatory proteins to the basal RNA polymerase II transcription machinery. Mediator is recruited to promoters by direct interactions with regulatory proteins and serves as a scaffold for the assembly of a functional preinitiation complex with RNA polymerase II and the general transcription factors. The sequence is that of Putative mediator of RNA polymerase II transcription subunit 28 (med28) from Dictyostelium discoideum (Social amoeba).